The sequence spans 217 residues: Ras-related protein RABA1e (217 aa).

20–27 (GDSGVGKS) lines the GTP pocket. Residues 42 to 50 (SKSTIGVEF) carry the Effector region motif. GTP contacts are provided by residues 68–72 (DTAGQ), 126–129 (NKAD), and 156–157 (SA). S-geranylgeranyl cysteine attachment occurs at residues Cys214 and Cys215.

It belongs to the small GTPase superfamily. Rab family.

The protein resides in the cell membrane. Functionally, intracellular vesicle trafficking and protein transport. This Arabidopsis thaliana (Mouse-ear cress) protein is Ras-related protein RABA1e (RABA1E).